Reading from the N-terminus, the 138-residue chain is Holo-[acyl-carrier-protein] synthase (138 aa).

Positions 8 and 54 each coordinate Mg(2+).

The protein belongs to the P-Pant transferase superfamily. AcpS family. Requires Mg(2+) as cofactor.

It localises to the cytoplasm. It catalyses the reaction apo-[ACP] + CoA = holo-[ACP] + adenosine 3',5'-bisphosphate + H(+). In terms of biological role, transfers the 4'-phosphopantetheine moiety from coenzyme A to a Ser of acyl-carrier-protein. This is Holo-[acyl-carrier-protein] synthase from Roseiflexus sp. (strain RS-1).